We begin with the raw amino-acid sequence, 286 residues long: Phosphate import ATP-binding protein PstB (286 aa).

The disordered stretch occupies residues 1–27 (MEPKETLRQRWPGRGRTEETGAMKKSD). Positions 15–27 (GRTEETGAMKKSD) are enriched in basic and acidic residues. An ABC transporter domain is found at 33 to 281 (MTVEHLNMYY…PDRKETEDYV (249 aa)). Residue 65–72 (GPSGCGKS) coordinates ATP.

It belongs to the ABC transporter superfamily. Phosphate importer (TC 3.A.1.7) family. In terms of assembly, the complex is composed of two ATP-binding proteins (PstB), two transmembrane proteins (PstC and PstA) and a solute-binding protein (PstS).

The protein resides in the cell membrane. It catalyses the reaction phosphate(out) + ATP + H2O = ADP + 2 phosphate(in) + H(+). In terms of biological role, part of the ABC transporter complex PstSACB involved in phosphate import. Responsible for energy coupling to the transport system. This Rubrobacter xylanophilus (strain DSM 9941 / JCM 11954 / NBRC 16129 / PRD-1) protein is Phosphate import ATP-binding protein PstB.